A 166-amino-acid chain; its full sequence is Photosystem I assembly protein Ycf3 (166 aa).

TPR repeat units follow at residues 35 to 68, 72 to 105, and 120 to 153; these read AFVY…EVDP, SFIF…NPSL, and GEQA…APLN.

The protein belongs to the Ycf3 family.

The protein localises to the plastid. The protein resides in the chloroplast thylakoid membrane. Functionally, essential for the assembly of the photosystem I (PSI) complex. May act as a chaperone-like factor to guide the assembly of the PSI subunits. In Ostreococcus tauri, this protein is Photosystem I assembly protein Ycf3.